Here is a 142-residue protein sequence, read N- to C-terminus: Transcriptional regulator MraZ (142 aa).

SpoVT-AbrB domains follow at residues 5 to 48 (EFEY…PLCE) and 77 to 120 (AFDV…DKET).

It belongs to the MraZ family. Forms oligomers.

Its subcellular location is the cytoplasm. The protein resides in the nucleoid. This chain is Transcriptional regulator MraZ, found in Dehalococcoides mccartyi (strain ATCC BAA-2266 / KCTC 15142 / 195) (Dehalococcoides ethenogenes (strain 195)).